A 258-amino-acid polypeptide reads, in one-letter code: Cyclohexa-1,5-dienecarbonyl-CoA hydratase (258 aa).

Belongs to the enoyl-CoA hydratase/isomerase family.

It catalyses the reaction cyclohexa-1,5-diene-1-carbonyl-CoA + H2O = 6-hydroxycyclohex-1-ene-1-carbonyl-CoA. Its pathway is aromatic compound metabolism; benzoyl-CoA degradation. Its function is as follows. Catalyzes the hydration of cyclohexa-1,5-diene-1-carboxyl-CoA. In Thauera aromatica, this protein is Cyclohexa-1,5-dienecarbonyl-CoA hydratase (dch).